We begin with the raw amino-acid sequence, 202 residues long: Pyridoxal 5'-phosphate synthase subunit PdxT (202 aa).

L-glutamine is bound at residue 52-54 (GES). The active-site Nucleophile is the Cys-84. L-glutamine is bound by residues Arg-116 and 143-144 (IR). Active-site charge relay system residues include His-184 and Glu-186.

This sequence belongs to the glutaminase PdxT/SNO family. In the presence of PdxS, forms a dodecamer of heterodimers. Only shows activity in the heterodimer.

The enzyme catalyses aldehydo-D-ribose 5-phosphate + D-glyceraldehyde 3-phosphate + L-glutamine = pyridoxal 5'-phosphate + L-glutamate + phosphate + 3 H2O + H(+). It catalyses the reaction L-glutamine + H2O = L-glutamate + NH4(+). It participates in cofactor biosynthesis; pyridoxal 5'-phosphate biosynthesis. Functionally, catalyzes the hydrolysis of glutamine to glutamate and ammonia as part of the biosynthesis of pyridoxal 5'-phosphate. The resulting ammonia molecule is channeled to the active site of PdxS. This Pyrobaculum neutrophilum (strain DSM 2338 / JCM 9278 / NBRC 100436 / V24Sta) (Thermoproteus neutrophilus) protein is Pyridoxal 5'-phosphate synthase subunit PdxT.